The chain runs to 338 residues: 1-aminocyclopropane-1-carboxylate deaminase (338 aa).

Lys-51 carries the post-translational modification N6-(pyridoxal phosphate)lysine. Ser-78 serves as the catalytic Nucleophile.

Belongs to the ACC deaminase/D-cysteine desulfhydrase family. Homotrimer. It depends on pyridoxal 5'-phosphate as a cofactor.

The enzyme catalyses 1-aminocyclopropane-1-carboxylate + H2O = 2-oxobutanoate + NH4(+). Functionally, catalyzes a cyclopropane ring-opening reaction, the irreversible conversion of 1-aminocyclopropane-1-carboxylate (ACC) to ammonia and alpha-ketobutyrate. Allows growth on ACC as a nitrogen source. The sequence is that of 1-aminocyclopropane-1-carboxylate deaminase from Burkholderia ambifaria (strain ATCC BAA-244 / DSM 16087 / CCUG 44356 / LMG 19182 / AMMD) (Burkholderia cepacia (strain AMMD)).